The chain runs to 388 residues: Lipid-A-disaccharide synthase (388 aa).

Belongs to the LpxB family.

It catalyses the reaction a lipid X + a UDP-2-N,3-O-bis[(3R)-3-hydroxyacyl]-alpha-D-glucosamine = a lipid A disaccharide + UDP + H(+). It functions in the pathway bacterial outer membrane biogenesis; LPS lipid A biosynthesis. Its function is as follows. Condensation of UDP-2,3-diacylglucosamine and 2,3-diacylglucosamine-1-phosphate to form lipid A disaccharide, a precursor of lipid A, a phosphorylated glycolipid that anchors the lipopolysaccharide to the outer membrane of the cell. The sequence is that of Lipid-A-disaccharide synthase from Burkholderia mallei (strain ATCC 23344).